Consider the following 250-residue polypeptide: 2,3-bisphosphoglycerate-dependent phosphoglycerate mutase (250 aa).

Substrate is bound by residues 12–19 (RHGQSAWN), 25–26 (TG), Arg-64, 91–94 (ERHY), Lys-102, 118–119 (RR), and 185–186 (GN). Residue His-13 is the Tele-phosphohistidine intermediate of the active site. Glu-91 acts as the Proton donor/acceptor in catalysis.

It belongs to the phosphoglycerate mutase family. BPG-dependent PGAM subfamily.

It carries out the reaction (2R)-2-phosphoglycerate = (2R)-3-phosphoglycerate. It functions in the pathway carbohydrate degradation; glycolysis; pyruvate from D-glyceraldehyde 3-phosphate: step 3/5. Functionally, catalyzes the interconversion of 2-phosphoglycerate and 3-phosphoglycerate. This Corynebacterium efficiens (strain DSM 44549 / YS-314 / AJ 12310 / JCM 11189 / NBRC 100395) protein is 2,3-bisphosphoglycerate-dependent phosphoglycerate mutase.